The primary structure comprises 211 residues: Nucleoside diphosphate kinase homolog 5 (211 aa).

The tract at residues 13–145 is NDK; it reads EKTLALIKPD…EREIRFMFPA (133 aa).

This sequence belongs to the NDK family. As to quaternary structure, component of the axonemal radial spoke complex 1 (RS1), at least composed of spoke head proteins RSPH1, RSPH3, RSPH9 and the cilia-specific component RSPH4A or sperm-specific component RSPH6A, spoke stalk proteins RSPH14, DNAJB13, DYDC1, ROPN1L and NME5, and the anchor protein IQUB. Interacts with IQUB. As to expression, expressed in the trachea, ependymal cells and oviduct (at protein level). Expressed predominantly in germ cells of the testis. Not expressed in testicular somatic cells.

The protein resides in the cell projection. Its subcellular location is the cilium. The protein localises to the cytoplasm. It is found in the cytoskeleton. It localises to the flagellum axoneme. In terms of biological role, functions as part of axonemal radial spoke complexes that play an important part in the motility of sperm and cilia. Does not seem to have nucleoside diphosphate kinase (NDPK) activity. Confers protection from cell death by BAX and alters the cellular levels of several antioxidant enzymes including GPX5. May play a role in spermiogenesis by increasing the ability of late-stage spermatids to eliminate reactive oxygen species. This is Nucleoside diphosphate kinase homolog 5 (Nme5) from Mus musculus (Mouse).